We begin with the raw amino-acid sequence, 485 residues long: ATP-dependent protease ATPase subunit HslU (485 aa).

Residues Ile-22 and 64-69 (GVGKTE) contribute to the ATP site. Residues 146–189 (KKTAATSAQPQDVSQASSGTTISLPSVSSTAQAEEHKAQNENDM) are disordered. The span at 149 to 177 (AATSAQPQDVSQASSGTTISLPSVSSTAQ) shows a compositional bias: polar residues. A compositionally biased stretch (basic and acidic residues) spans 178 to 189 (AEEHKAQNENDM). Residues Asp-297, Glu-363, and Arg-435 each coordinate ATP.

It belongs to the ClpX chaperone family. HslU subfamily. As to quaternary structure, a double ring-shaped homohexamer of HslV is capped on each side by a ring-shaped HslU homohexamer. The assembly of the HslU/HslV complex is dependent on binding of ATP.

It is found in the cytoplasm. Functionally, ATPase subunit of a proteasome-like degradation complex; this subunit has chaperone activity. The binding of ATP and its subsequent hydrolysis by HslU are essential for unfolding of protein substrates subsequently hydrolyzed by HslV. HslU recognizes the N-terminal part of its protein substrates and unfolds these before they are guided to HslV for hydrolysis. The sequence is that of ATP-dependent protease ATPase subunit HslU from Treponema denticola (strain ATCC 35405 / DSM 14222 / CIP 103919 / JCM 8153 / KCTC 15104).